The following is a 127-amino-acid chain: Large ribosomal subunit protein uL22 (127 aa).

This sequence belongs to the universal ribosomal protein uL22 family. In terms of assembly, part of the 50S ribosomal subunit.

This protein binds specifically to 23S rRNA; its binding is stimulated by other ribosomal proteins, e.g. L4, L17, and L20. It is important during the early stages of 50S assembly. It makes multiple contacts with different domains of the 23S rRNA in the assembled 50S subunit and ribosome. Its function is as follows. The globular domain of the protein is located near the polypeptide exit tunnel on the outside of the subunit, while an extended beta-hairpin is found that lines the wall of the exit tunnel in the center of the 70S ribosome. The protein is Large ribosomal subunit protein uL22 of Methylorubrum extorquens (strain CM4 / NCIMB 13688) (Methylobacterium extorquens).